The following is a 154-amino-acid chain: Endoribonuclease YbeY (154 aa).

Residues His114, His118, and His124 each coordinate Zn(2+).

This sequence belongs to the endoribonuclease YbeY family. Zn(2+) serves as cofactor.

The protein localises to the cytoplasm. Its function is as follows. Single strand-specific metallo-endoribonuclease involved in late-stage 70S ribosome quality control and in maturation of the 3' terminus of the 16S rRNA. This chain is Endoribonuclease YbeY, found in Aggregatibacter actinomycetemcomitans (Actinobacillus actinomycetemcomitans).